A 239-amino-acid polypeptide reads, in one-letter code: Ribose-5-phosphate isomerase A (239 aa).

Substrate contacts are provided by residues 31–34 (FGST), 88–91 (DGAD), and 101–104 (KGGG). E110 acts as the Proton acceptor in catalysis. K128 serves as a coordination point for substrate.

It belongs to the ribose 5-phosphate isomerase family. Homodimer.

The enzyme catalyses aldehydo-D-ribose 5-phosphate = D-ribulose 5-phosphate. The protein operates within carbohydrate degradation; pentose phosphate pathway; D-ribose 5-phosphate from D-ribulose 5-phosphate (non-oxidative stage): step 1/1. In terms of biological role, catalyzes the reversible conversion of ribose-5-phosphate to ribulose 5-phosphate. This chain is Ribose-5-phosphate isomerase A, found in Chloroflexus aurantiacus (strain ATCC 29366 / DSM 635 / J-10-fl).